Reading from the N-terminus, the 404-residue chain is cAMP-dependent protein kinase regulatory subunit (404 aa).

Positions 14-144 are dimerization and phosphorylation; the sequence is LTDHELLRIP…RLKTAIAGNF (131 aa). Phosphoserine is present on Ser105. 3',5'-cyclic AMP is bound by residues 145–276, Glu223, Arg232, 277–398, Glu344, and Arg353; these read LFSH…EKFP and CCRH…GVEE.

Belongs to the cAMP-dependent kinase regulatory chain family. In terms of assembly, tetramer, composed of 2 regulatory (R) and 2 catalytic (C) subunits. In the presence of cAMP it dissociates into 2 active monomeric C subunits and an R dimer.

CAMP-dependent protein kinase PKA regulatory subunit. The protein is cAMP-dependent protein kinase regulatory subunit (PKAR) of Colletotrichum trifolii.